We begin with the raw amino-acid sequence, 289 residues long: 4-hydroxy-tetrahydrodipicolinate synthase (289 aa).

T44 serves as a coordination point for pyruvate. Y130 serves as the catalytic Proton donor/acceptor. The Schiff-base intermediate with substrate role is filled by K158. I200 is a binding site for pyruvate.

It belongs to the DapA family. In terms of assembly, homotetramer; dimer of dimers.

The protein resides in the cytoplasm. The enzyme catalyses L-aspartate 4-semialdehyde + pyruvate = (2S,4S)-4-hydroxy-2,3,4,5-tetrahydrodipicolinate + H2O + H(+). It participates in amino-acid biosynthesis; L-lysine biosynthesis via DAP pathway; (S)-tetrahydrodipicolinate from L-aspartate: step 3/4. Its function is as follows. Catalyzes the condensation of (S)-aspartate-beta-semialdehyde [(S)-ASA] and pyruvate to 4-hydroxy-tetrahydrodipicolinate (HTPA). This Archaeoglobus fulgidus (strain ATCC 49558 / DSM 4304 / JCM 9628 / NBRC 100126 / VC-16) protein is 4-hydroxy-tetrahydrodipicolinate synthase.